The chain runs to 466 residues: tRNA(Ile)-lysidine synthase (466 aa).

Position 42–47 (42–47 (SGGVDS)) interacts with ATP.

It belongs to the tRNA(Ile)-lysidine synthase family.

It is found in the cytoplasm. The catalysed reaction is cytidine(34) in tRNA(Ile2) + L-lysine + ATP = lysidine(34) in tRNA(Ile2) + AMP + diphosphate + H(+). Functionally, ligates lysine onto the cytidine present at position 34 of the AUA codon-specific tRNA(Ile) that contains the anticodon CAU, in an ATP-dependent manner. Cytidine is converted to lysidine, thus changing the amino acid specificity of the tRNA from methionine to isoleucine. The polypeptide is tRNA(Ile)-lysidine synthase (Anaplasma marginale (strain St. Maries)).